A 454-amino-acid chain; its full sequence is Phosphoglucosamine mutase (454 aa).

Catalysis depends on Ser-101, which acts as the Phosphoserine intermediate. Mg(2+) is bound by residues Ser-101, Asp-243, Asp-245, and Asp-247. A Phosphoserine modification is found at Ser-101.

Belongs to the phosphohexose mutase family. The cofactor is Mg(2+). Activated by phosphorylation.

The catalysed reaction is alpha-D-glucosamine 1-phosphate = D-glucosamine 6-phosphate. In terms of biological role, catalyzes the conversion of glucosamine-6-phosphate to glucosamine-1-phosphate. This chain is Phosphoglucosamine mutase, found in Geobacter sp. (strain M21).